The primary structure comprises 598 residues: Glutamyl-tRNA(Gln) amidotransferase subunit E (598 aa).

It belongs to the GatB/GatE family. GatE subfamily. In terms of assembly, heterodimer of GatD and GatE.

It carries out the reaction L-glutamyl-tRNA(Gln) + L-glutamine + ATP + H2O = L-glutaminyl-tRNA(Gln) + L-glutamate + ADP + phosphate + H(+). Its function is as follows. Allows the formation of correctly charged Gln-tRNA(Gln) through the transamidation of misacylated Glu-tRNA(Gln) in organisms which lack glutaminyl-tRNA synthetase. The reaction takes place in the presence of glutamine and ATP through an activated gamma-phospho-Glu-tRNA(Gln). The GatDE system is specific for glutamate and does not act on aspartate. The polypeptide is Glutamyl-tRNA(Gln) amidotransferase subunit E (Thermoplasma volcanium (strain ATCC 51530 / DSM 4299 / JCM 9571 / NBRC 15438 / GSS1)).